Reading from the N-terminus, the 439-residue chain is Mitochondrial distribution and morphology protein 12 (439 aa).

Residues 1 to 439 (MSIDINWEAA…VYPSFWTFLV (439 aa)) form the SMP-LTD domain. Residues 71-84 (EEDEGDEDFSDDQD) are compositionally biased toward acidic residues. Disordered stretches follow at residues 71 to 104 (EEDE…GTWQ), 182 to 278 (TPLA…HEKK), and 362 to 385 (YIPG…RRDD). Over residues 212 to 229 (DYPRPVHRQTDTDIDSGH) the composition is skewed to basic and acidic residues. Residues 230–255 (SRPSTADTLNSINSQRISNPALSHPH) show a composition bias toward polar residues. Positions 256 to 269 (SSNESHPDTRDHSP) are enriched in basic and acidic residues.

The protein belongs to the MDM12 family. As to quaternary structure, component of the ER-mitochondria encounter structure (ERMES) or MDM complex, composed of MMM1, MDM10, MDM12 and MDM34. An MMM1 homodimer associates with one molecule of MDM12 on each side in a pairwise head-to-tail manner, and the SMP-LTD domains of MMM1 and MDM12 generate a continuous hydrophobic tunnel for phospholipid trafficking.

Its subcellular location is the mitochondrion outer membrane. It localises to the endoplasmic reticulum membrane. Component of the ERMES/MDM complex, which serves as a molecular tether to connect the endoplasmic reticulum (ER) and mitochondria. Components of this complex are involved in the control of mitochondrial shape and protein biogenesis, and function in nonvesicular lipid trafficking between the ER and mitochondria. MDM12 is required for the interaction of the ER-resident membrane protein MMM1 and the outer mitochondrial membrane-resident beta-barrel protein MDM10. The MDM12-MMM1 subcomplex functions in the major beta-barrel assembly pathway that is responsible for biogenesis of all mitochondrial outer membrane beta-barrel proteins, and acts in a late step after the SAM complex. The MDM10-MDM12-MMM1 subcomplex further acts in the TOM40-specific pathway after the action of the MDM12-MMM1 complex. Essential for establishing and maintaining the structure of mitochondria and maintenance of mtDNA nucleoids. The sequence is that of Mitochondrial distribution and morphology protein 12 from Uncinocarpus reesii (strain UAMH 1704).